The chain runs to 402 residues: MFQQLSASIRHNAHIIFLCISWYFISSLASQVTKQVLTVCPLPLFLGEFQFIYTAVLAWFTCYIAYSFPGFYRIFPNGTFPEYYIDDRETSRAARKESKLSSLIIPPSKPILQTVLPLGLFQFVGKYFGHTATSLVPVSTVASIKTLSPMFILLLQKILKISTLKITLTLIFSLCTLVLGVWIIVQEDNRSPASSNELREFSKYGVICAMISMFIFVLQNIYGKTVFTYRSQTDESQSNSGFSRQESPLPLYEKLDEKLVAKKKPKSYDKLTLMIYISLVGFCLSFGWFITLEFPVLFRYFFQINSSSTVIKAFPVSLFLLNGTFHFIQAMITFHLLGEVSTLTYSIANLMKRFAIIAVSWVFIGRRITWLQVFGLVLNTLGLFLYERCTSQSKIKAKIRPE.

The Cytoplasmic portion of the chain corresponds to 1 to 12 (MFQQLSASIRHN). A helical membrane pass occupies residues 13–33 (AHIIFLCISWYFISSLASQVT). Residues 34 to 50 (KQVLTVCPLPLFLGEFQ) lie on the Extracellular side of the membrane. A helical transmembrane segment spans residues 51–71 (FIYTAVLAWFTCYIAYSFPGF). The Cytoplasmic portion of the chain corresponds to 72–103 (YRIFPNGTFPEYYIDDRETSRAARKESKLSSL). Residues 104 to 124 (IIPPSKPILQTVLPLGLFQFV) traverse the membrane as a helical segment. The Extracellular portion of the chain corresponds to 125–134 (GKYFGHTATS). The helical transmembrane segment at 135–155 (LVPVSTVASIKTLSPMFILLL) threads the bilayer. The Cytoplasmic segment spans residues 156-165 (QKILKISTLK). Residues 166 to 186 (ITLTLIFSLCTLVLGVWIIVQ) traverse the membrane as a helical segment. At 187 to 206 (EDNRSPASSNELREFSKYGV) the chain is on the extracellular side. Residues 207-227 (ICAMISMFIFVLQNIYGKTVF) traverse the membrane as a helical segment. Over 228-271 (TYRSQTDESQSNSGFSRQESPLPLYEKLDEKLVAKKKPKSYDKL) the chain is Cytoplasmic. A helical membrane pass occupies residues 272–292 (TLMIYISLVGFCLSFGWFITL). Residues 293–353 (EFPVLFRYFF…TYSIANLMKR (61 aa)) are Extracellular-facing. A helical membrane pass occupies residues 354 to 374 (FAIIAVSWVFIGRRITWLQVF). The Cytoplasmic segment spans residues 375 to 402 (GLVLNTLGLFLYERCTSQSKIKAKIRPE).

This sequence belongs to the TPT transporter family.

The protein resides in the membrane. This is an uncharacterized protein from Saccharomyces cerevisiae (strain ATCC 204508 / S288c) (Baker's yeast).